A 609-amino-acid chain; its full sequence is Threonine--tRNA ligase (609 aa).

Residues 1 to 143 are editing domain; that stretch reads MRVLYLHTER…SFKPGDSRAE (143 aa). Catalytic regions lie at residues 195–491 and 196–491; these read PRYL…PRLP and RYLE…PRLP. Positions 288, 339, and 460 each coordinate Zn(2+).

Belongs to the class-II aminoacyl-tRNA synthetase family. As to quaternary structure, homodimer. Zn(2+) serves as cofactor.

The protein resides in the cytoplasm. It carries out the reaction tRNA(Thr) + L-threonine + ATP = L-threonyl-tRNA(Thr) + AMP + diphosphate + H(+). Functionally, catalyzes the attachment of threonine to tRNA(Thr) in a two-step reaction: L-threonine is first activated by ATP to form Thr-AMP and then transferred to the acceptor end of tRNA(Thr). Also edits incorrectly charged L-seryl-tRNA(Thr). The chain is Threonine--tRNA ligase from Pyrobaculum neutrophilum (strain DSM 2338 / JCM 9278 / NBRC 100436 / V24Sta) (Thermoproteus neutrophilus).